A 244-amino-acid polypeptide reads, in one-letter code: Ureidoacrylate amidohydrolase RutB (244 aa).

D38 functions as the Proton acceptor in the catalytic mechanism. The active site involves K147. C180 serves as the catalytic Nucleophile.

It belongs to the isochorismatase family. RutB subfamily.

It carries out the reaction (Z)-3-ureidoacrylate + H2O + H(+) = (Z)-3-aminoacrylate + NH4(+) + CO2. It catalyses the reaction (Z)-3-ureidoacrylate + H2O = (Z)-3-aminoacrylate + carbamate + H(+). The enzyme catalyses (Z)-2-methylureidoacrylate + H2O + H(+) = (Z)-2-methylaminoacrylate + NH4(+) + CO2. Functionally, hydrolyzes ureidoacrylate to form aminoacrylate and carbamate. The carbamate hydrolyzes spontaneously, thereby releasing one of the nitrogen atoms of the pyrimidine ring as ammonia and one of its carbon atoms as CO2. This Escherichia coli O55:H7 (strain CB9615 / EPEC) protein is Ureidoacrylate amidohydrolase RutB.